A 457-amino-acid polypeptide reads, in one-letter code: uncharacterized protein (457 aa).

Helical transmembrane passes span 1–21 (MVSS…MTLL) and 250–270 (ILIV…ATTF).

Its subcellular location is the membrane. This is an uncharacterized protein from Saccharomyces cerevisiae (strain ATCC 204508 / S288c) (Baker's yeast).